A 277-amino-acid polypeptide reads, in one-letter code: MPELPEVETVMRGFRDAFEGHRISHVTVNRPDLRWPFPADLREKLEGHHVLSFRRRAKYILVRLEGGWSMLLHLGMSGRLTIGRAGTNATPPAHEHLVLETDSGARAGLVDPRRFGMVDLVRTSEEDSHRLLAHLGMEPLSDAMTGPALAELFRGRRSPIKSALLDQKLIAGLGNIYVCEALFRCGIHPERQACTLTGEETAALAEAIPQILEQAIASGGSSLRDYVQADGTKGAFQDLHLVYGREGVPCPNCGAEHPIQRITQAGRSTFFCPTCQK.

Catalysis depends on Pro2, which acts as the Schiff-base intermediate with DNA. The active-site Proton donor is Glu3. Lys58 acts as the Proton donor; for beta-elimination activity in catalysis. Positions 94, 113, and 156 each coordinate DNA. Residues 241–277 (LVYGREGVPCPNCGAEHPIQRITQAGRSTFFCPTCQK) form an FPG-type zinc finger. Arg267 functions as the Proton donor; for delta-elimination activity in the catalytic mechanism.

This sequence belongs to the FPG family. In terms of assembly, monomer. The cofactor is Zn(2+).

It catalyses the reaction Hydrolysis of DNA containing ring-opened 7-methylguanine residues, releasing 2,6-diamino-4-hydroxy-5-(N-methyl)formamidopyrimidine.. It carries out the reaction 2'-deoxyribonucleotide-(2'-deoxyribose 5'-phosphate)-2'-deoxyribonucleotide-DNA = a 3'-end 2'-deoxyribonucleotide-(2,3-dehydro-2,3-deoxyribose 5'-phosphate)-DNA + a 5'-end 5'-phospho-2'-deoxyribonucleoside-DNA + H(+). Functionally, involved in base excision repair of DNA damaged by oxidation or by mutagenic agents. Acts as a DNA glycosylase that recognizes and removes damaged bases. Has a preference for oxidized purines, such as 7,8-dihydro-8-oxoguanine (8-oxoG). Has AP (apurinic/apyrimidinic) lyase activity and introduces nicks in the DNA strand. Cleaves the DNA backbone by beta-delta elimination to generate a single-strand break at the site of the removed base with both 3'- and 5'-phosphates. This is Formamidopyrimidine-DNA glycosylase from Gluconobacter oxydans (strain 621H) (Gluconobacter suboxydans).